Reading from the N-terminus, the 500-residue chain is MALRVTADVWLARPWQCLHRTRALGTTATLAPKTLQPFEAIPQYSRNKWLKMIQILREQGQENLHLEMHQVFRELGPIFRHSVGKTQIVSVMLPEDAEKLHQVESMLPRRMHLEPWVAHRELRGLRRGVFLLNGPEWRLNRLRLNRNVLSPKAVQKFVPMVDMVARDFLETLKEKVLQNARGSLTMDVQQSLFNYTIEASNFALFGERLGLLGHDLSPGSLKFIHALHSMFKSTSQLLFLPKSLTRWTSTRVWKEHFDAWDVISEYANRCIWKVHQELRLGSSQTYSGIVAELISQGSLPLDAIKANSMELTAGSVDTTAIPLVMTLFELARNPDVQKALRQESLAAEASIAANPQKAMSDLPLLRAALKETLRLYPVGGFLERILSSDLVLQNYHVPAGTLVLLYLYSMGRNPAVFPRPERYMPQRWLERKRSFQHLAFGFGVRQCLGRRLAEVEMMLLLHHILKTFQVETLRQEDVQMAYRFVLMPSSSPVLTFRPVS.

A mitochondrion-targeting transit peptide spans 1–24 (MALRVTADVWLARPWQCLHRTRAL). A 21-hydroxyprogesterone-binding site is contributed by Phe-381. Cys-447 is a binding site for heme.

This sequence belongs to the cytochrome P450 family. Heme serves as cofactor.

Its subcellular location is the mitochondrion inner membrane. It carries out the reaction a steroid + 2 reduced [adrenodoxin] + O2 + 2 H(+) = an 11beta-hydroxysteroid + 2 oxidized [adrenodoxin] + H2O. The enzyme catalyses 21-hydroxyprogesterone + 2 reduced [adrenodoxin] + O2 + 2 H(+) = corticosterone + 2 oxidized [adrenodoxin] + H2O. It catalyses the reaction corticosterone + 2 reduced [adrenodoxin] + O2 + 2 H(+) = 18-hydroxycorticosterone + 2 oxidized [adrenodoxin] + H2O. The catalysed reaction is 18-hydroxycorticosterone + 2 reduced [adrenodoxin] + O2 + 2 H(+) = aldosterone + 2 oxidized [adrenodoxin] + 2 H2O. It carries out the reaction 11-deoxycortisol + 2 reduced [adrenodoxin] + O2 + 2 H(+) = cortisol + 2 oxidized [adrenodoxin] + H2O. The enzyme catalyses 21-hydroxyprogesterone + 2 reduced [adrenodoxin] + O2 + 2 H(+) = 18-hydroxy-11-deoxycorticosterone + 2 oxidized [adrenodoxin] + H2O. It catalyses the reaction cortisol + 2 reduced [adrenodoxin] + O2 + 2 H(+) = 18-hydroxycortisol + 2 oxidized [adrenodoxin] + H2O. The catalysed reaction is 18-hydroxycortisol + 2 reduced [adrenodoxin] + O2 + 2 H(+) = 18-oxocortisol + 2 oxidized [adrenodoxin] + 2 H2O. The protein operates within steroid biosynthesis. In terms of biological role, a cytochrome P450 monooxygenase that catalyzes the biosynthesis of aldosterone, the main mineralocorticoid in the human body responsible for salt and water homeostasis, thus involved in blood pressure regulation, arterial hypertension, and the development of heart failure. Catalyzes three sequential oxidative reactions of 11-deoxycorticosterone (21-hydroxyprogesterone), namely 11-beta hydroxylation, followed by two successive oxidations at C18 yielding 18-hydroxy and then 18-oxo intermediates (that would not leave the enzyme active site during the consecutive hydroxylation reactions), ending with the formation of aldosterone. Can also produce 18-hydroxycortisol and 18-oxocortisol, derived from successive oxidations of cortisol at C18, normally found at very low levels, but significantly increased in primary aldosteronism, the most common form of secondary hypertension. Mechanistically, uses molecular oxygen inserting one oxygen atom into a substrate and reducing the second into a water molecule. Two electrons are provided by NADPH via a two-protein mitochondrial transfer system comprising flavoprotein FDXR (adrenodoxin/ferredoxin reductase) and nonheme iron-sulfur protein FDX1 or FDX2 (adrenodoxin/ferredoxin). Could also be involved in the androgen metabolic pathway. The sequence is that of Cytochrome P450 11B2, mitochondrial (Cyp11b2) from Mus musculus (Mouse).